We begin with the raw amino-acid sequence, 466 residues long: Vimentin (466 aa).

Composition is skewed to low complexity over residues 1–13 (MSTR…SYRR) and 20–31 (TASRPSSSRSYV). Residues 1 to 31 (MSTRTVSSSSYRRMFGGPGTASRPSSSRSYV) form a disordered region. Ser2 carries the N-acetylserine modification. The head stretch occupies residues 2–95 (STRTVSSSSY…FSLADAINTE (94 aa)). The residue at position 7 (Ser7) is a Phosphoserine; alternate. Ser7 carries an O-linked (GlcNAc) serine; alternate glycan. Ser8, Ser9, and Ser10 each carry phosphoserine. Residue Thr20 is modified to Phosphothreonine. Phosphoserine is present on residues Ser25 and Ser26. Residue Thr33 is glycosylated (O-linked (GlcNAc) threonine). Ser34 is a glycosylation site (O-linked (GlcNAc) serine; alternate). Ser34 carries the phosphoserine; by PKC; alternate modification. The residue at position 39 (Ser39) is a Phosphoserine; by CaMK2, PKA, PKC and ROCK2. Phosphoserine is present on residues Ser42, Ser47, Ser49, and Ser51. Tyr53 carries the phosphotyrosine modification. The residue at position 55 (Ser55) is a Phosphoserine. Phosphoserine; by CDK5 and CDK1 is present on Ser56. The residue at position 61 (Tyr61) is a Phosphotyrosine. Position 66 is a phosphoserine (Ser66). Residue Ser72 is modified to Phosphoserine; by AURKB and ROCK2. Ser73 and Ser87 each carry phosphoserine. Positions 96 to 131 (FKNTRTNEKVELQELNDRFANYIDKVRFLEQQNKIL) are coil 1A. Residues 96–131 (FKNTRTNEKVELQELNDRFANYIDKVRFLEQQNKIL) are a coiled coil. An IF rod domain is found at 103–411 (EKVELQELND…KLLEGEESRI (309 aa)). Residue Lys104 forms a Glycyl lysine isopeptide (Lys-Gly) (interchain with G-Cter in SUMO2) linkage. Tyr117 carries the post-translational modification Phosphotyrosine. Lys120, Lys129, and Lys139 each carry N6-acetyllysine; alternate. Residues Lys120 and Lys129 each carry the N6-succinyllysine; alternate modification. Glycyl lysine isopeptide (Lys-Gly) (interchain with G-Cter in SUMO2); alternate cross-links involve residues Lys120, Lys129, and Lys139. The interval 132–153 (LAELEQLKGQGKSRLGDLYEEE) is linker 1. Ser144 is modified (phosphoserine). Residues 154-245 (MRELRRQVDQ…KLHDEEIQEL (92 aa)) are a coiled coil. The interval 154–245 (MRELRRQVDQ…KLHDEEIQEL (92 aa)) is coil 1B. Lys168 is modified (N6-acetyllysine). An N6-acetyllysine; alternate modification is found at Lys188. Position 188 is an N6-succinyllysine; alternate (Lys188). Ser214 is subject to Phosphoserine. Position 223 is an N6-acetyllysine; alternate (Lys223). Lys223 participates in a covalent cross-link: Glycyl lysine isopeptide (Lys-Gly) (interchain with G-Cter in SUMO2); alternate. Position 226 is a phosphoserine (Ser226). At Lys235 the chain carries N6-acetyllysine. The interval 246-268 (QAQIQEQHVQIDMDVSKPDLTAA) is linker 12. Residue Lys262 forms a Glycyl lysine isopeptide (Lys-Gly) (interchain with G-Cter in SUMO2) linkage. Residues 269–407 (LRDVRQQYES…ATYRKLLEGE (139 aa)) form a coil 2 region. Position 294 is an N6-acetyllysine; alternate (Lys294). Position 294 is an N6-succinyllysine; alternate (Lys294). Lys294 is covalently cross-linked (Glycyl lysine isopeptide (Lys-Gly) (interchain with G-Cter in SUMO2); alternate). Ser299 carries the phosphoserine modification. A coiled-coil region spans residues 303–407 (NRNNDALRQA…ATYRKLLEGE (105 aa)). Lys313 is covalently cross-linked (Glycyl lysine isopeptide (Lys-Gly) (interchain with G-Cter in SUMO2)). Residue Ser325 is modified to Phosphoserine. The short motif at 326 to 329 (LTCE) is the [IL]-x-C-x-x-[DE] motif element. An N6-acetyllysine; alternate modification is found at Lys373. A Glycyl lysine isopeptide (Lys-Gly) (interchain with G-Cter in SUMO2); alternate cross-link involves residue Lys373. The interval 408–466 (ESRISLPLPNFSSLNLRETNLESLPLVDTHSKRTLLIKTVETRDGQVINETSQHHDDLE) is tail. Phosphoserine occurs at positions 409, 412, 419, and 420. The residue at position 426 (Thr426) is a Phosphothreonine. The residue at position 430 (Ser430) is a Phosphoserine. Position 436 is a phosphothreonine (Thr436). At Ser438 the chain carries Phosphoserine. Lys439 participates in a covalent cross-link: Glycyl lysine isopeptide (Lys-Gly) (interchain with G-Cter in SUMO2). Lys445 carries the N6-acetyllysine; alternate modification. Residue Lys445 is modified to N6-succinyllysine; alternate. A Glycyl lysine isopeptide (Lys-Gly) (interchain with G-Cter in SUMO2); alternate cross-link involves residue Lys445. A Glycyl lysine isopeptide (Lys-Gly) (interchain with G-Cter in SUMO1); alternate cross-link involves residue Lys445. A phosphothreonine mark is found at Thr446 and Thr458. At Ser459 the chain carries Phosphoserine.

Belongs to the intermediate filament family. In terms of assembly, homomer assembled from elementary dimers. Identified in complexes that contain VIM, EZR, AHNAK, BFSP1, BFSP2, ANK2, PLEC, PRX and spectrin. Interacts with BCAS3. Interacts with LGSN. Interacts with SYNM. Interacts (via rod region) with PLEC (via CH 1 domain). Interacts with STK33. Interacts with LARP6. Interacts with RAB8B. Interacts with TOR1A; the interaction associates TOR1A with the cytoskeleton. Interacts with TOR1AIP1. Interacts with TOR1AIP1. Interacts with DIAPH1. Interacts with EPPK1; interaction is dependent of higher-order structure of intermediate filament. Interacts with the non-receptor tyrosine kinase SRMS; the interaction leads to phosphorylation of VIM. Interacts with NOD2. Interacts (via head region) with CORO1C. Interacts with HDGF. Interacts with PRKCE (via phorbol-ester/DAG-type 2 domain). Interacts with BFSP2. Interacts with PPL. Interacts with PKP1 and PKP2. Interacts with SCRIB (via PDZ domains); the interaction protects SCRIB from proteasomal degradation and facilitates SCRIB localization to intermediate filaments, the interaction is reduced by cell contact inhibition. In terms of processing, one of the most prominent phosphoproteins in various cells of mesenchymal origin. Phosphorylation is enhanced during cell division, at which time vimentin filaments are significantly reorganized. Phosphorylation by PKN1 inhibits the formation of filaments. Filament disassembly during mitosis is promoted by phosphorylation at Ser-55 as well as by nestin. Phosphorylated at Ser-56 by CDK5 during neutrophil secretion in the cytoplasm. Phosphorylated by STK33. Phosphorylated on tyrosine residues by SRMS. S-nitrosylation is induced by interferon-gamma and oxidatively-modified low-densitity lipoprotein (LDL(ox)) possibly implicating the iNOS-S100A8/9 transnitrosylase complex.

The protein localises to the cytoplasm. Its subcellular location is the cytoskeleton. The protein resides in the nucleus matrix. It localises to the cell membrane. Vimentins are class-III intermediate filaments found in various non-epithelial cells, especially mesenchymal cells. Vimentin is attached to the nucleus, endoplasmic reticulum, and mitochondria, either laterally or terminally. Plays a role in cell directional movement, orientation, cell sheet organization and Golgi complex polarization at the cell migration front. Protects SCRIB from proteasomal degradation and facilitates its localization to intermediate filaments in a cell contact-mediated manner. Its function is as follows. Involved with LARP6 in the stabilization of type I collagen mRNAs for CO1A1 and CO1A2. This chain is Vimentin (VIM), found in Sus scrofa (Pig).